Reading from the N-terminus, the 478-residue chain is Methylenetetrahydrofolate--tRNA-(uracil-5-)-methyltransferase TrmFO (478 aa).

16–21 (GAGLAG) lines the FAD pocket. The disordered stretch occupies residues 429–448 (PLANPPTKGPDGKRLRGPEK). Positions 438 to 448 (PDGKRLRGPEK) are enriched in basic and acidic residues.

Belongs to the MnmG family. TrmFO subfamily. The cofactor is FAD.

Its subcellular location is the cytoplasm. It carries out the reaction uridine(54) in tRNA + (6R)-5,10-methylene-5,6,7,8-tetrahydrofolate + NADH + H(+) = 5-methyluridine(54) in tRNA + (6S)-5,6,7,8-tetrahydrofolate + NAD(+). The enzyme catalyses uridine(54) in tRNA + (6R)-5,10-methylene-5,6,7,8-tetrahydrofolate + NADPH + H(+) = 5-methyluridine(54) in tRNA + (6S)-5,6,7,8-tetrahydrofolate + NADP(+). Catalyzes the folate-dependent formation of 5-methyl-uridine at position 54 (M-5-U54) in all tRNAs. This Rhodopseudomonas palustris (strain ATCC BAA-98 / CGA009) protein is Methylenetetrahydrofolate--tRNA-(uracil-5-)-methyltransferase TrmFO.